The primary structure comprises 397 residues: E3 ubiquitin-protein ligase RNF149 (397 aa).

An N-terminal signal peptide occupies residues 1–20; the sequence is MLRWLCLYSALCALTHGSSA. Positions 39-49 are enriched in polar residues; the sequence is TNSSVTGSTES. The segment at 39–60 is disordered; that stretch reads TNSSVTGSTESGRYGDSSPKES. Residues asparagine 40 and asparagine 140 are each glycosylated (N-linked (GlcNAc...) asparagine). The region spanning 83–170 is the PA domain; that stretch reads YIVPGTSAAA…PKGMEIMEPL (88 aa). Residues 196 to 216 form a helical membrane-spanning segment; sequence VVFVAIAFITMMIISLAWLIF. Residue asparagine 231 is glycosylated (N-linked (GlcNAc...) asparagine). The RING-type; atypical zinc-finger motif lies at 264 to 305; that stretch reads CAVCIENYKTKDLVRILPCKHIFHRLCIDPWLIEHRTCPMCK. The interval 341–397 is disordered; that stretch reads SITQEESRSEGNNLPSSSTGSSLQQSNSVKDDAGETTALLDDPGNDNAAATHTQDSH. The span at 351–368 shows a compositional bias: low complexity; it reads GNNLPSSSTGSSLQQSNS. Residues 388-397 show a composition bias toward polar residues; the sequence is AAATHTQDSH.

It localises to the membrane. It catalyses the reaction S-ubiquitinyl-[E2 ubiquitin-conjugating enzyme]-L-cysteine + [acceptor protein]-L-lysine = [E2 ubiquitin-conjugating enzyme]-L-cysteine + N(6)-ubiquitinyl-[acceptor protein]-L-lysine.. It functions in the pathway protein modification; protein ubiquitination. Its function is as follows. E3 ubiquitin-protein ligase. Ubiquitinates BRAF, inducing its proteasomal degradation. This is E3 ubiquitin-protein ligase RNF149 (rnf149) from Xenopus laevis (African clawed frog).